A 350-amino-acid polypeptide reads, in one-letter code: Ribosomal RNA large subunit methyltransferase Cfr (350 aa).

Glutamate 92 acts as the Proton acceptor in catalysis. The 235-residue stretch at 99 to 333 (EAGWESFCIS…VTIRSQFGRE (235 aa)) folds into the Radical SAM core domain. Cysteine 106 and cysteine 338 are oxidised to a cystine. Residues cysteine 113, cysteine 117, and cysteine 120 each coordinate [4Fe-4S] cluster. Residues 159-160 (GE), serine 190, 213-215 (SLH), and asparagine 293 contribute to the S-adenosyl-L-methionine site. Cysteine 338 (S-methylcysteine intermediate) is an active-site residue.

The protein belongs to the radical SAM superfamily. RlmN family. Cfr subfamily. It depends on [4Fe-4S] cluster as a cofactor.

It localises to the cytoplasm. The enzyme catalyses adenosine(2503) in 23S rRNA + 2 reduced [2Fe-2S]-[ferredoxin] + 2 S-adenosyl-L-methionine = 8-methyladenosine(2503) in 23S rRNA + 5'-deoxyadenosine + L-methionine + 2 oxidized [2Fe-2S]-[ferredoxin] + S-adenosyl-L-homocysteine. Specifically methylates position 8 of adenine 2503 in 23S rRNA. Confers resistance to some classes of antibiotics. The chain is Ribosomal RNA large subunit methyltransferase Cfr from Shouchella clausii (strain KSM-K16) (Alkalihalobacillus clausii).